Here is a 496-residue protein sequence, read N- to C-terminus: Alanine aminotransferase 1 (496 aa).

An N-acetylalanine modification is found at alanine 2. Threonine 22 carries the post-translational modification Phosphothreonine. Lysine 314 carries the N6-(pyridoxal phosphate)lysine modification.

This sequence belongs to the class-I pyridoxal-phosphate-dependent aminotransferase family. Alanine aminotransferase subfamily. As to quaternary structure, homodimer. Pyridoxal 5'-phosphate serves as cofactor. In terms of tissue distribution, liver, kidney, heart, and skeletal muscles. Expressed at moderate levels in the adipose tissue.

It localises to the cytoplasm. It carries out the reaction L-alanine + 2-oxoglutarate = pyruvate + L-glutamate. The protein operates within amino-acid degradation; L-alanine degradation via transaminase pathway; pyruvate from L-alanine: step 1/1. In terms of biological role, catalyzes the reversible transamination between alanine and 2-oxoglutarate to form pyruvate and glutamate. Participates in cellular nitrogen metabolism and also in liver gluconeogenesis starting with precursors transported from skeletal muscles. The polypeptide is Alanine aminotransferase 1 (GPT) (Homo sapiens (Human)).